A 119-amino-acid polypeptide reads, in one-letter code: Ribonuclease P protein component (119 aa).

The protein belongs to the RnpA family. Consists of a catalytic RNA component (M1 or rnpB) and a protein subunit.

It carries out the reaction Endonucleolytic cleavage of RNA, removing 5'-extranucleotides from tRNA precursor.. Functionally, RNaseP catalyzes the removal of the 5'-leader sequence from pre-tRNA to produce the mature 5'-terminus. It can also cleave other RNA substrates such as 4.5S RNA. The protein component plays an auxiliary but essential role in vivo by binding to the 5'-leader sequence and broadening the substrate specificity of the ribozyme. The protein is Ribonuclease P protein component of Salmonella paratyphi A (strain AKU_12601).